The sequence spans 40 residues: Acyl-CoA-binding protein 2 (40 aa).

Basic and acidic residues predominate over residues 1-15 (ALKEEFEEHAEKAKT). The segment at 1–25 (ALKEEFEEHAEKAKTLPENTSSENK) is disordered. One can recognise an ACB domain in the interval 2–40 (LKEEFEEHAEKAKTLPENTSSENKLTLYGLYKQATVGNV).

It belongs to the ACBP family.

The protein localises to the cytoplasm. Binds medium- and long-chain acyl-CoA esters with very high affinity and may function as an intracellular carrier of acyl-CoA esters. The polypeptide is Acyl-CoA-binding protein 2 (Digitalis lanata (Grecian foxglove)).